A 448-amino-acid polypeptide reads, in one-letter code: Protease Do-like 8, chloroplastic (448 aa).

The segment at 152–333 is serine protease; sequence EGNGSGVVWD…IPSSTVLKIV (182 aa). Catalysis depends on charge relay system residues His-171, Asp-214, and Ser-292. The PDZ domain occupies 336-433; that stretch reads LIQFSKVLRA…DKVTLKIKRG (98 aa).

This sequence belongs to the peptidase S1C family.

It localises to the plastid. The protein localises to the chloroplast thylakoid lumen. In terms of biological role, probable serine protease. This chain is Protease Do-like 8, chloroplastic (DEGP8), found in Arabidopsis thaliana (Mouse-ear cress).